The following is a 708-amino-acid chain: Polyribonucleotide nucleotidyltransferase (708 aa).

2 residues coordinate Mg(2+): D486 and D492. Residues 553 to 612 enclose the KH domain; it reads PRITTIKVPPQKVREVIGSGGKVIREITEVTGTKIDIEDDGTIKIASADAEATQRAVDWI. Positions 622 to 690 constitute an S1 motif domain; the sequence is GVVYTGKVVK…DRGKIKLSMK (69 aa).

The protein belongs to the polyribonucleotide nucleotidyltransferase family. It depends on Mg(2+) as a cofactor.

It is found in the cytoplasm. The enzyme catalyses RNA(n+1) + phosphate = RNA(n) + a ribonucleoside 5'-diphosphate. In terms of biological role, involved in mRNA degradation. Catalyzes the phosphorolysis of single-stranded polyribonucleotides processively in the 3'- to 5'-direction. This chain is Polyribonucleotide nucleotidyltransferase, found in Rhodospirillum rubrum (strain ATCC 11170 / ATH 1.1.1 / DSM 467 / LMG 4362 / NCIMB 8255 / S1).